The primary structure comprises 261 residues: Indole-3-glycerol phosphate synthase (261 aa).

This sequence belongs to the TrpC family.

The catalysed reaction is 1-(2-carboxyphenylamino)-1-deoxy-D-ribulose 5-phosphate + H(+) = (1S,2R)-1-C-(indol-3-yl)glycerol 3-phosphate + CO2 + H2O. The protein operates within amino-acid biosynthesis; L-tryptophan biosynthesis; L-tryptophan from chorismate: step 4/5. The protein is Indole-3-glycerol phosphate synthase of Burkholderia vietnamiensis (strain G4 / LMG 22486) (Burkholderia cepacia (strain R1808)).